A 206-amino-acid chain; its full sequence is MDNKSNGKLIALAIGGAVLMGTLFFLVSFLTGYSPAPNHSAILTPLRSFMGWFLLIFCASLIIMGLGKMSGAISDKWFLSFPLSIFVIVMVMFFSLRFYWEKGRTTTVDGKYIRSVEQLNDFLNKPAATSDLPPVPADFDFAAAEKLTDAKCNKCHTLGSVADLFRTKYKKTGQVKLIVKRMQGFPGANISDDEVIEIGTWLQEKF.

The next 3 membrane-spanning stretches (helical) occupy residues 10–30 (IALA…VSFL), 49–69 (FMGW…LGKM), and 76–96 (KWFL…FFSL). Residues Cys-152, Cys-155, His-156, and Met-182 each coordinate heme.

In terms of assembly, component of the photosynthetic reaction center. The reaction center interacts with the Fenna-Matthews-Olson (FMO, fmoA) complex. Binds 1 heme group per subunit.

The protein resides in the cell inner membrane. In terms of biological role, monoheme cytochrome which is the immediate electron donor to P840 of the photosynthetic reaction center complex. This Chlorobaculum parvum (strain DSM 263 / NCIMB 8327) (Chlorobium vibrioforme subsp. thiosulfatophilum) protein is Photosynthetic reaction center cytochrome c-551 (pscC).